A 611-amino-acid polypeptide reads, in one-letter code: Broad-specificity linear acyl-CoA dehydrogenase FadE5 (611 aa).

FAD is bound by residues 162 to 165 (MVLT), Ser-171, and Thr-198. Ser-171 contacts a 2,3-saturated acyl-CoA. Residues 224–225 (TK) and Arg-301 each bind a 2,3-saturated acyl-CoA. An FAD-binding site is contributed by Arg-326. An a 2,3-saturated acyl-CoA-binding site is contributed by Lys-338. 420 to 424 (QTLGG) lines the FAD pocket. Glu-447 serves as a coordination point for a 2,3-saturated acyl-CoA. The Proton acceptor role is filled by Glu-447. An FAD-binding site is contributed by Thr-449. Residues Asp-456 and 460–461 (RK) each bind a 2,3-saturated acyl-CoA.

The protein belongs to the acyl-CoA dehydrogenase family. As to quaternary structure, homodimer. Requires FAD as cofactor.

It catalyses the reaction a long-chain 2,3-saturated fatty acyl-CoA + oxidized [electron-transfer flavoprotein] + H(+) = a long-chain (2E)-enoyl-CoA + reduced [electron-transfer flavoprotein]. The enzyme catalyses a medium-chain 2,3-saturated fatty acyl-CoA + oxidized [electron-transfer flavoprotein] + H(+) = a medium-chain (2E)-enoyl-CoA + reduced [electron-transfer flavoprotein]. The catalysed reaction is a short-chain 2,3-saturated fatty acyl-CoA + oxidized [electron-transfer flavoprotein] + H(+) = a short-chain (2E)-enoyl-CoA + reduced [electron-transfer flavoprotein]. It carries out the reaction octadecanoyl-CoA + oxidized [electron-transfer flavoprotein] + H(+) = (2E)-octadecenoyl-CoA + reduced [electron-transfer flavoprotein]. It catalyses the reaction oxidized [electron-transfer flavoprotein] + hexadecanoyl-CoA + H(+) = (2E)-hexadecenoyl-CoA + reduced [electron-transfer flavoprotein]. The enzyme catalyses dodecanoyl-CoA + oxidized [electron-transfer flavoprotein] + H(+) = (2E)-dodecenoyl-CoA + reduced [electron-transfer flavoprotein]. The catalysed reaction is decanoyl-CoA + oxidized [electron-transfer flavoprotein] + H(+) = (2E)-decenoyl-CoA + reduced [electron-transfer flavoprotein]. It carries out the reaction hexanoyl-CoA + oxidized [electron-transfer flavoprotein] + H(+) = (2E)-hexenoyl-CoA + reduced [electron-transfer flavoprotein]. It catalyses the reaction butanoyl-CoA + oxidized [electron-transfer flavoprotein] + H(+) = (2E)-butenoyl-CoA + reduced [electron-transfer flavoprotein]. It participates in lipid metabolism; fatty acid metabolism. Acyl-CoA dehydrogenase that exhibits broad specificity for linear acyl-CoA substrates, with a preference for long-chain substrates. The polypeptide is Broad-specificity linear acyl-CoA dehydrogenase FadE5 (Mycobacterium tuberculosis (strain ATCC 25618 / H37Rv)).